Here is a 181-residue protein sequence, read N- to C-terminus: ATP-dependent protease subunit HslV (181 aa).

Threonine 9 is a catalytic residue. The Na(+) site is built by glycine 164, cysteine 167, and threonine 170.

The protein belongs to the peptidase T1B family. HslV subfamily. A double ring-shaped homohexamer of HslV is capped on each side by a ring-shaped HslU homohexamer. The assembly of the HslU/HslV complex is dependent on binding of ATP.

The protein localises to the cytoplasm. The enzyme catalyses ATP-dependent cleavage of peptide bonds with broad specificity.. Allosterically activated by HslU binding. In terms of biological role, protease subunit of a proteasome-like degradation complex believed to be a general protein degrading machinery. The protein is ATP-dependent protease subunit HslV of Gemmatimonas aurantiaca (strain DSM 14586 / JCM 11422 / NBRC 100505 / T-27).